The following is a 316-amino-acid chain: MTKSPLTLYLAAPRGFCAGVDRAIKIVEMAIEKWGAPVYVRHEIVHNKFVVDGLRAKGAVFVEELDECPDDRPVIFSAHGVPKAIPAEAERRQMVYVDATCPLVSKVHIEAERHAEHGLQIIMIGHRGHPETIGTMGQLPEGEVLLVETVADVARIAVRDPARLAFVTQTTLSVDDTRDIVAALQARFPQIVGPHKEDICYATTNRQEAVKAVAPKSDALLVVGAPNSSNSRRLVEVAAKAGCSYAQLVQRADDIDWRALDGIATIAVSAGASAPELLVNEVIDAFRARFDVTVEVVETAVEHVEFKVPRVLRQPA.

Residue Cys17 participates in [4Fe-4S] cluster binding. 2 residues coordinate (2E)-4-hydroxy-3-methylbut-2-enyl diphosphate: His46 and His79. The dimethylallyl diphosphate site is built by His46 and His79. His46 and His79 together coordinate isopentenyl diphosphate. [4Fe-4S] cluster is bound at residue Cys101. His129 contacts (2E)-4-hydroxy-3-methylbut-2-enyl diphosphate. A dimethylallyl diphosphate-binding site is contributed by His129. His129 contacts isopentenyl diphosphate. Glu131 serves as the catalytic Proton donor. Position 170 (Thr170) interacts with (2E)-4-hydroxy-3-methylbut-2-enyl diphosphate. Cys200 provides a ligand contact to [4Fe-4S] cluster. (2E)-4-hydroxy-3-methylbut-2-enyl diphosphate is bound by residues Ser228, Ser229, Asn230, and Ser273. Dimethylallyl diphosphate contacts are provided by Ser228, Ser229, Asn230, and Ser273. Isopentenyl diphosphate is bound by residues Ser228, Ser229, Asn230, and Ser273.

The protein belongs to the IspH family. The cofactor is [4Fe-4S] cluster.

It catalyses the reaction isopentenyl diphosphate + 2 oxidized [2Fe-2S]-[ferredoxin] + H2O = (2E)-4-hydroxy-3-methylbut-2-enyl diphosphate + 2 reduced [2Fe-2S]-[ferredoxin] + 2 H(+). It carries out the reaction dimethylallyl diphosphate + 2 oxidized [2Fe-2S]-[ferredoxin] + H2O = (2E)-4-hydroxy-3-methylbut-2-enyl diphosphate + 2 reduced [2Fe-2S]-[ferredoxin] + 2 H(+). It participates in isoprenoid biosynthesis; dimethylallyl diphosphate biosynthesis; dimethylallyl diphosphate from (2E)-4-hydroxy-3-methylbutenyl diphosphate: step 1/1. The protein operates within isoprenoid biosynthesis; isopentenyl diphosphate biosynthesis via DXP pathway; isopentenyl diphosphate from 1-deoxy-D-xylulose 5-phosphate: step 6/6. Catalyzes the conversion of 1-hydroxy-2-methyl-2-(E)-butenyl 4-diphosphate (HMBPP) into a mixture of isopentenyl diphosphate (IPP) and dimethylallyl diphosphate (DMAPP). Acts in the terminal step of the DOXP/MEP pathway for isoprenoid precursor biosynthesis. The protein is 4-hydroxy-3-methylbut-2-enyl diphosphate reductase of Ruegeria pomeroyi (strain ATCC 700808 / DSM 15171 / DSS-3) (Silicibacter pomeroyi).